The primary structure comprises 541 residues: Chaperonin GroEL (541 aa).

Residues 29-32, 86-90, G413, 478-480, and D494 each bind ATP; these read TLGP, DGTTT, and DAL.

It belongs to the chaperonin (HSP60) family. Forms a cylinder of 14 subunits composed of two heptameric rings stacked back-to-back. Interacts with the co-chaperonin GroES.

It localises to the cytoplasm. The enzyme catalyses ATP + H2O + a folded polypeptide = ADP + phosphate + an unfolded polypeptide.. In terms of biological role, together with its co-chaperonin GroES, plays an essential role in assisting protein folding. The GroEL-GroES system forms a nano-cage that allows encapsulation of the non-native substrate proteins and provides a physical environment optimized to promote and accelerate protein folding. The polypeptide is Chaperonin GroEL (Alkaliphilus oremlandii (strain OhILAs) (Clostridium oremlandii (strain OhILAs))).